The chain runs to 519 residues: 6-phosphofructo-2-kinase/fructose-2,6-bisphosphatase 2 (519 aa).

A compositionally biased stretch (polar residues) spans 1 to 17 (MSENSTFSTEDSCNSSY). Positions 1–22 (MSENSTFSTEDSCNSSYKPHAS) are disordered. At Ser-2 the chain carries N-acetylserine. The tract at residues 2-251 (SENSTFSTED…VYYLMNIHVH (250 aa)) is 6-phosphofructo-2-kinase. A Phosphoserine; by PKA modification is found at Ser-32. Position 48–56 (48–56 (GLPARGKTY)) interacts with ATP. Beta-D-fructose 6-phosphate is bound by residues Arg-81 and Arg-105. Asp-131 is an active-site residue. Thr-133 and Arg-139 together coordinate beta-D-fructose 6-phosphate. Cys-161 is a catalytic residue. 170 to 175 (NILEVK) provides a ligand contact to ATP. 3 residues coordinate beta-D-fructose 6-phosphate: Lys-175, Arg-196, and Tyr-200. Positions 252–519 (PRTIYLCRHG…PKTQVSIPVV (268 aa)) are fructose-2,6-bisphosphatase. Arg-259 contributes to the beta-D-fructose 2,6-bisphosphate binding site. The active-site Tele-phosphohistidine intermediate is the His-260. Residues Asn-266 and Gly-272 each contribute to the beta-D-fructose 2,6-bisphosphate site. Residue Glu-329 is the Proton donor/acceptor of the active site. Beta-D-fructose 2,6-bisphosphate-binding residues include Tyr-340, Arg-354, Lys-358, Tyr-369, Gln-395, and Arg-399. 351–354 (FALR) is an ATP binding site. ATP-binding positions include 395–399 (QAVMR) and Tyr-431. A disordered region spans residues 448–493 (HRDKPTHNFPKSQTPVRMRRNSFTPLSSSNTIRRPRNYSVGSRPLK). Polar residues predominate over residues 456–479 (FPKSQTPVRMRRNSFTPLSSSNTI). At Ser-469 the chain carries Phosphoserine. A Phosphothreonine modification is found at Thr-471. Thr-478 is subject to Phosphothreonine; by PKC. Phosphoserine occurs at positions 486 and 496. Positions 500 to 519 (ALDMQEGADQPKTQVSIPVV) are disordered. The span at 510–519 (PKTQVSIPVV) shows a compositional bias: polar residues.

This sequence in the C-terminal section; belongs to the phosphoglycerate mutase family. Homodimer. Forms a heterodimer with PFKFB3. In terms of processing, phosphorylation by AMPK stimulates activity. In terms of tissue distribution, highest levels in kidney; also found in heart, brain, spleen, lung, liver, skeletal muscle and testis.

The catalysed reaction is beta-D-fructose 2,6-bisphosphate + H2O = beta-D-fructose 6-phosphate + phosphate. The enzyme catalyses beta-D-fructose 6-phosphate + ATP = beta-D-fructose 2,6-bisphosphate + ADP + H(+). With respect to regulation, phosphorylation results in the activation of the kinase activity. Its function is as follows. Synthesis and degradation of fructose 2,6-bisphosphate. This Mus musculus (Mouse) protein is 6-phosphofructo-2-kinase/fructose-2,6-bisphosphatase 2 (Pfkfb2).